The primary structure comprises 309 residues: Ribosomal RNA small subunit methyltransferase H (309 aa).

S-adenosyl-L-methionine is bound by residues 33–35 (GGH), D53, F79, D100, and Q107.

It belongs to the methyltransferase superfamily. RsmH family.

The protein resides in the cytoplasm. The enzyme catalyses cytidine(1402) in 16S rRNA + S-adenosyl-L-methionine = N(4)-methylcytidine(1402) in 16S rRNA + S-adenosyl-L-homocysteine + H(+). Functionally, specifically methylates the N4 position of cytidine in position 1402 (C1402) of 16S rRNA. The protein is Ribosomal RNA small subunit methyltransferase H of Clostridium kluyveri (strain NBRC 12016).